A 660-amino-acid chain; its full sequence is Pentatricopeptide repeat-containing protein At1g03560, mitochondrial (660 aa).

The N-terminal 12 residues, 1 to 12, are a transit peptide targeting the mitochondrion; that stretch reads MRRFYRKPFSVP. PPR repeat units follow at residues 151 to 185, 186 to 220, 221 to 255, 256 to 290, 291 to 325, 326 to 360, 361 to 395, 396 to 430, 431 to 465, 466 to 496, 502 to 536, 537 to 571, 574 to 605, and 606 to 640; these read NLEC…EFPM, TVSA…GIEP, TLYT…RIKP, DIVT…GHEA, DKIT…GIQV, PPHA…GSKP, NVAI…GFKP, DVVT…GLAI, NSMF…GCTR, DSYC…MEEE, TVYT…GITP, TAAC…GVIL, ACED…GREV, and PGRI…GYER.

Belongs to the PPR family. P subfamily.

Its subcellular location is the mitochondrion. This Arabidopsis thaliana (Mouse-ear cress) protein is Pentatricopeptide repeat-containing protein At1g03560, mitochondrial.